A 295-amino-acid polypeptide reads, in one-letter code: ATP synthase gamma chain (295 aa).

The protein belongs to the ATPase gamma chain family. As to quaternary structure, F-type ATPases have 2 components, CF(1) - the catalytic core - and CF(0) - the membrane proton channel. CF(1) has five subunits: alpha(3), beta(3), gamma(1), delta(1), epsilon(1). CF(0) has three main subunits: a, b and c.

Its subcellular location is the cell inner membrane. Produces ATP from ADP in the presence of a proton gradient across the membrane. The gamma chain is believed to be important in regulating ATPase activity and the flow of protons through the CF(0) complex. This is ATP synthase gamma chain from Campylobacter concisus (strain 13826).